Consider the following 383-residue polypeptide: Acetylornithine deacetylase (383 aa).

H80 contacts Zn(2+). D82 is an active-site residue. Position 112 (D112) interacts with Zn(2+). E144 is an active-site residue. Zn(2+) is bound by residues E145, E169, and H355.

The protein belongs to the peptidase M20A family. ArgE subfamily. Homodimer. It depends on Zn(2+) as a cofactor. Co(2+) is required as a cofactor. The cofactor is glutathione.

It is found in the cytoplasm. The catalysed reaction is N(2)-acetyl-L-ornithine + H2O = L-ornithine + acetate. It participates in amino-acid biosynthesis; L-arginine biosynthesis; L-ornithine from N(2)-acetyl-L-ornithine (linear): step 1/1. Catalyzes the hydrolysis of the amide bond of N(2)-acetylated L-amino acids. Cleaves the acetyl group from N-acetyl-L-ornithine to form L-ornithine, an intermediate in L-arginine biosynthesis pathway, and a branchpoint in the synthesis of polyamines. The chain is Acetylornithine deacetylase from Escherichia coli O157:H7.